The chain runs to 354 residues: MGRSKLQIIGPNGEIYQPTLKIQRNNDPNKDAEVLYEAMKGWGTNEDRIIGILGYRSSHQRIIIRDQFKALYGKDLITELSSETSGHFKKLLKMLLTDTDKMNARALYKAMKGGGTDESTIIEVLCTSSNCEIEDIKTAYQSVLKDYGISDPRRTLESDVEDDLSGPFKNLVIALLQAKREEIPFEIAEQIQSKGIKSVVDMNLVEQDVETLWDAGEARLGTDEAAIIKILVSRSVWHIQAIAQHFEKKYGKSLIDSLASETSGDFESALLLTLNTCLNRPKAYADLLLKAMKGLGTDDCTLMRIIVSRCELDLGSICQEFERSQGSSLEEWIRSETSGDYRKLLLALIGAEWS.

Annexin repeat units follow at residues 26–97, 98–177, 203–275, and 279–350; these read NDPN…MLLT, DTDK…ALLQ, NLVE…LTLN, and NRPK…ALIG. Residues Met39, Gly41, Gly43, Thr44, Glu46, Glu83, Met111, Gly113, Gly115, Glu118, Asp163, Asp265, Met292, Gly294, Leu295, Gly296, and Glu336 each contribute to the Ca(2+) site.

Belongs to the annexin family. As to quaternary structure, homodimer.

Its subcellular location is the tegument. It is found in the secreted. It localises to the extracellular exosome. The protein resides in the host cell. In terms of biological role, involved in reproduction of the worm. Involved in host-parasite interaction. Delivered into the host cell by means of parasite exosomes. Binds to acidic phospholipid membranes in a calcium-dependent manner in vitro. Causes aggregation of liposomes in the presence of calcium, but not in its absence. Likely to promote membrane fusion. May provide structural integrity within the tegument. The protein is Annexin A13 of Schistosoma japonicum (Blood fluke).